The chain runs to 103 residues: N(4)-acetylcytidine amidohydrolase (103 aa).

An ASCH domain is found at 6–101; the sequence is ITFSQRFQDD…QTQFYVIEFK (96 aa). Residue K21 is the Proton acceptor of the active site. T24 (nucleophile) is an active-site residue. The Proton donor role is filled by E74.

It belongs to the N(4)-acetylcytidine amidohydrolase family.

The catalysed reaction is N(4)-acetylcytidine + H2O = cytidine + acetate + H(+). The enzyme catalyses N(4)-acetyl-2'-deoxycytidine + H2O = 2'-deoxycytidine + acetate + H(+). It carries out the reaction N(4)-acetylcytosine + H2O = cytosine + acetate + H(+). Functionally, catalyzes the hydrolysis of N(4)-acetylcytidine (ac4C). The sequence is that of N(4)-acetylcytidine amidohydrolase (yqfB) from Shigella boydii serotype 4 (strain Sb227).